We begin with the raw amino-acid sequence, 196 residues long: Probable thymidylate kinase (196 aa).

Position 8–15 (8–15) interacts with ATP; that stretch reads GIDASGKT.

It belongs to the thymidylate kinase family.

It carries out the reaction dTMP + ATP = dTDP + ADP. In Metallosphaera sedula (strain ATCC 51363 / DSM 5348 / JCM 9185 / NBRC 15509 / TH2), this protein is Probable thymidylate kinase.